A 161-amino-acid polypeptide reads, in one-letter code: UPF0303 protein Spro_1996 (161 aa).

This sequence belongs to the UPF0303 family.

The polypeptide is UPF0303 protein Spro_1996 (Serratia proteamaculans (strain 568)).